The sequence spans 52 residues: Disintegrin multisquamatin (52 aa).

The Disintegrin domain occupies 1-50 (EGEECESGPCCRNCKFLKEGTICKRARGDDMDDYCNGKTCDCPRNPHKGP). Cystine bridges form between Cys5/Cys14, Cys10/Cys35, Cys11/Cys40, and Cys23/Cys42. The Cell attachment site motif lies at 27-29 (RGD).

This sequence belongs to the venom metalloproteinase (M12B) family. P-II subfamily. P-IIa sub-subfamily. Monomer. As to expression, expressed by the venom gland.

It is found in the secreted. Functionally, inhibits ADP-induced human, canine and rabbit platelet aggregation by binding with high affinity to alpha-IIb/beta-3 (ITGA2B/ITGB3). The polypeptide is Disintegrin multisquamatin (Echis multisquamatus (Central Asian sand viper)).